The primary structure comprises 300 residues: 11-beta-hydroxysteroid dehydrogenase 1 (300 aa).

Topologically, residues 1 to 7 (MAFLKKY) are cytoplasmic. The helical; Signal-anchor for type II membrane protein transmembrane segment at 8–24 (LLTILMVFLAYYYYSAN) threads the bilayer. The Lumenal portion of the chain corresponds to 25–300 (EKFRPEMLQG…SNEKLYGRWA (276 aa)). Residues 41–67 (GASKGIGREIAYHLAKMGAHVVVTARS), 92–93 (SM), and 119–123 (NHVLY) each bind NADP(+). S170 is a substrate binding site. Catalysis depends on Y183, which acts as the Proton acceptor. An NADP(+)-binding site is contributed by 183–187 (YSASK). N-linked (GlcNAc...) asparagine glycosylation is present at N207. 218–222 (IDTET) serves as a coordination point for NADP(+).

It belongs to the short-chain dehydrogenases/reductases (SDR) family. Homodimer. Widely expressed in all peripheral tissues, with highest expression in liver, followed by kidney and lung, and very low expression in heart, lung, spleen, stomach, small intestine, colon, skin, skeletal muscle, and ovary.

It is found in the endoplasmic reticulum membrane. The catalysed reaction is an 11beta-hydroxysteroid + NADP(+) = an 11-oxosteroid + NADPH + H(+). It catalyses the reaction cortisone + NADPH + H(+) = cortisol + NADP(+). It carries out the reaction corticosterone + NADP(+) = 11-dehydrocorticosterone + NADPH + H(+). The enzyme catalyses a 7beta-hydroxysteroid + NADP(+) = a 7-oxosteroid + NADPH + H(+). The catalysed reaction is 7-oxocholesterol + NADPH + H(+) = 7beta-hydroxycholesterol + NADP(+). It catalyses the reaction chenodeoxycholate + NADP(+) = 7-oxolithocholate + NADPH + H(+). It carries out the reaction 7-oxolithocholate + NADPH + H(+) = ursodeoxycholate + NADP(+). The enzyme catalyses glycochenodeoxycholate + NADP(+) = 7-oxoglycolithocholate + NADPH + H(+). The catalysed reaction is taurochenodeoxycholate + NADP(+) = 7-oxotaurolithocholate + NADPH + H(+). It catalyses the reaction tauroursodeoxycholate + NADP(+) = 7-oxotaurolithocholate + NADPH + H(+). It carries out the reaction glycoursodeoxycholate + NADP(+) = 7-oxoglycolithocholate + NADPH + H(+). The enzyme catalyses 7-oxopregnenolone + NADPH + H(+) = 7beta-hydroxypregnenolone + NADP(+). The catalysed reaction is 3beta,7alpha-dihydroxyandrost-5-en-17-one + NADP(+) = 3beta-hydroxy-5-androstene-7,17-dione + NADPH + H(+). It catalyses the reaction 3beta-hydroxy-5-androstene-7,17-dione + NADPH + H(+) = 3beta,7beta-dihydroxyandrost-5-en-17-one + NADP(+). It carries out the reaction 3beta-hydroxy-5alpha-androstane-7,17-dione + NADPH + H(+) = 3beta,7beta-dihydroxy-5alpha-androstan-17-one + NADP(+). Functionally, controls the reversible conversion of biologically active glucocorticoids such as cortisone to cortisol, and 11-dehydrocorticosterone to corticosterone in the presence of NADP(H). Participates in the corticosteroid receptor-mediated anti-inflammatory response, as well as metabolic and homeostatic processes. Bidirectional in vitro, predominantly functions as a reductase in vivo, thereby increasing the concentration of active glucocorticoids. It has broad substrate specificity, besides glucocorticoids, it accepts other steroid and sterol substrates. Interconverts 7-oxo- and 7-hydroxy-neurosteroids such as 7-oxopregnenolone and 7beta-hydroxypregnenolone, 7-oxodehydroepiandrosterone (3beta-hydroxy-5-androstene-7,17-dione) and 7beta-hydroxydehydroepiandrosterone (3beta,7beta-dihydroxyandrost-5-en-17-one), among others. Catalyzes the stereo-specific conversion of the major dietary oxysterol, 7-ketocholesterol (7-oxocholesterol), into the more polar 7-beta-hydroxycholesterol metabolite. 7-oxocholesterol is one of the most important oxysterols, it participates in several events such as induction of apoptosis, accumulation in atherosclerotic lesions, lipid peroxidation, and induction of foam cell formation. Mediates the 7-oxo reduction of 7-oxolithocholate mainly to chenodeoxycholate, and to a lesser extent to ursodeoxycholate, both in its free form and when conjugated to glycine or taurine, providing a link between glucocorticoid activation and bile acid metabolism. Catalyzes the synthesis of 7-beta-25-dihydroxycholesterol from 7-oxo-25-hydroxycholesterol in vitro, which acts as a ligand for the G-protein-coupled receptor (GPCR) Epstein-Barr virus-induced gene 2 (EBI2) and may thereby regulate immune cell migration. The sequence is that of 11-beta-hydroxysteroid dehydrogenase 1 (HSD11B1) from Cavia porcellus (Guinea pig).